A 312-amino-acid chain; its full sequence is Glyoxylate/hydroxypyruvate reductase A (312 aa).

Residue R227 is part of the active site. H275 (proton donor) is an active-site residue.

It belongs to the D-isomer specific 2-hydroxyacid dehydrogenase family. GhrA subfamily.

It is found in the cytoplasm. It catalyses the reaction glycolate + NADP(+) = glyoxylate + NADPH + H(+). The enzyme catalyses (R)-glycerate + NAD(+) = 3-hydroxypyruvate + NADH + H(+). The catalysed reaction is (R)-glycerate + NADP(+) = 3-hydroxypyruvate + NADPH + H(+). In terms of biological role, catalyzes the NADPH-dependent reduction of glyoxylate and hydroxypyruvate into glycolate and glycerate, respectively. The protein is Glyoxylate/hydroxypyruvate reductase A of Klebsiella pneumoniae (strain 342).